The primary structure comprises 549 residues: Glucose-6-phosphate isomerase (549 aa).

The active-site Proton donor is the E355. Catalysis depends on residues H386 and K514.

It belongs to the GPI family.

The protein localises to the cytoplasm. It catalyses the reaction alpha-D-glucose 6-phosphate = beta-D-fructose 6-phosphate. Its pathway is carbohydrate biosynthesis; gluconeogenesis. It participates in carbohydrate degradation; glycolysis; D-glyceraldehyde 3-phosphate and glycerone phosphate from D-glucose: step 2/4. Catalyzes the reversible isomerization of glucose-6-phosphate to fructose-6-phosphate. The polypeptide is Glucose-6-phosphate isomerase (Edwardsiella ictaluri (strain 93-146)).